The chain runs to 155 residues: 6,7-dimethyl-8-ribityllumazine synthase (155 aa).

Residues Phe-23, 57 to 59 (AFE), and 81 to 83 (AVI) each bind 5-amino-6-(D-ribitylamino)uracil. Residue 86–87 (ST) participates in (2S)-2-hydroxy-3-oxobutyl phosphate binding. The Proton donor role is filled by His-89. Phe-114 contributes to the 5-amino-6-(D-ribitylamino)uracil binding site. Arg-128 is a binding site for (2S)-2-hydroxy-3-oxobutyl phosphate.

Belongs to the DMRL synthase family.

The enzyme catalyses (2S)-2-hydroxy-3-oxobutyl phosphate + 5-amino-6-(D-ribitylamino)uracil = 6,7-dimethyl-8-(1-D-ribityl)lumazine + phosphate + 2 H2O + H(+). Its pathway is cofactor biosynthesis; riboflavin biosynthesis; riboflavin from 2-hydroxy-3-oxobutyl phosphate and 5-amino-6-(D-ribitylamino)uracil: step 1/2. Catalyzes the formation of 6,7-dimethyl-8-ribityllumazine by condensation of 5-amino-6-(D-ribitylamino)uracil with 3,4-dihydroxy-2-butanone 4-phosphate. This is the penultimate step in the biosynthesis of riboflavin. This chain is 6,7-dimethyl-8-ribityllumazine synthase, found in Trichlorobacter lovleyi (strain ATCC BAA-1151 / DSM 17278 / SZ) (Geobacter lovleyi).